The following is a 304-amino-acid chain: Protoheme IX farnesyltransferase 2 (304 aa).

9 consecutive transmembrane segments (helical) span residues 28-48, 50-70, 98-118, 122-142, 150-170, 176-196, 223-243, 245-265, and 282-302; these read VVAL…VVDF, WLQA…AAAF, ISVA…LYAL, LTAW…TMYL, IVIA…AVTG, AWLL…AIAI, ILLY…VGMV, SVYL…AWKL, and IYHL…GLFF.

Belongs to the UbiA prenyltransferase family. Protoheme IX farnesyltransferase subfamily.

Its subcellular location is the cell inner membrane. It carries out the reaction heme b + (2E,6E)-farnesyl diphosphate + H2O = Fe(II)-heme o + diphosphate. It participates in porphyrin-containing compound metabolism; heme O biosynthesis; heme O from protoheme: step 1/1. In terms of biological role, converts heme B (protoheme IX) to heme O by substitution of the vinyl group on carbon 2 of heme B porphyrin ring with a hydroxyethyl farnesyl side group. In Vibrio campbellii (strain ATCC BAA-1116), this protein is Protoheme IX farnesyltransferase 2.